The following is a 372-amino-acid chain: Cyanuric acid amidohydrolase (372 aa).

The tract at residues 1–105 is RU A; the sequence is MPTTLRRAHV…IVFEAREVDE (105 aa). Substrate is bound by residues Arg-56 and 84-85; that span reads SG. The segment at 115–252 is RU B; it reads SLALGRARTP…HEIMVAGMSR (138 aa). Residue Lys-165 is part of the active site. Substrate is bound by residues Arg-197 and 235 to 236; that span reads SG. The Nucleophile role is filled by Ser-235. The RU C stretch occupies residues 258–372; sequence LAIDHGVMRD…GPVAIIVERT (115 aa). Residue Glu-305 participates in Mg(2+) binding. Substrate contacts are provided by residues Arg-332 and 351–352; that span reads SG. Positions 354, 357, 358, 359, and 362 each coordinate Mg(2+).

Belongs to the cyclic amide hydrolase (CyAH) family. Homotetramer.

The catalysed reaction is cyanurate + H2O = 1-carboxybiuret + H(+). Its pathway is xenobiotic degradation; atrazine degradation; biuret from cyanurate: step 1/1. Its activity is regulated as follows. Inhibited by barbituric acid. Responsible for the hydrolysis of cyanuric acid, an intermediate formed during catabolism of s-triazine based compounds in herbicides such as atrazine and polymers such as melamine. Catalyzes the hydrolytic opening of the s-triazine ring of cyanuric acid (2,4,6-trihydroxy-s-triazine) to yield carbon dioxide and carboxybiuret, which spontaneously decarboxylates to biuret. The polypeptide is Cyanuric acid amidohydrolase (Bradyrhizobium sp. (strain ORS 375)).